Consider the following 622-residue polypeptide: MNGNHKQALSGVTLAAIGVVYGDIGTSPLYTLRECLSGQFGFGVEPASILGFLSLIFWLLILVVSVKYLSFVMRADNAGEGGILTLMSLATRNTPAKWTPLLIILGLIGGSFFYGEVVITPAMSVMSAIEGLNIAAPSLDPYIVPLSVLVLTLLFAIQKHGTATVGKLFAPIMLTWFITLAVLGLNSIFQHPEVLGALNPVWALRFFAKYQTASFFALGAVVLAITGVEALYADMGHFGKSPIRRAWFMVVLPSLVLNYFGQGALLLAHPEAITNPFFLLAPKWALLPLLLLATLATVIASQAVISGVFSLTRQAVRLGYLSPIRIVHTSEQESGQIYIPVINWMLYISVVIVIMSFEHSSNLAAAYGIAVTGTMVLTSILSCSVARHSWHWNKYLVAALFVALLAIDVPLFAANLAKIFSGGWLPLTLGAVMFTVMTSWKSERFQLIRRLNEHGNSLEPMIASLEKSPPTRVAGTAVYMSRVVNVIPHALLHNLKHNKVLHERIILLTLRVEEVPYVHNVRRVCIEQLSPTFWRVVASYGWRETPNVEEIFHRCNAEGLSCRMMETSFFMAHESLIMKERPWYLYLRGKLFMLLQRNALRAPDQFEIPPNRVIELGSQVDI.

12 consecutive transmembrane segments (helical) span residues 9-29, 46-66, 99-119, 137-157, 169-189, 213-233, 247-267, 285-305, 337-357, 363-383, 396-416, and 419-439; these read LSGV…TSPL, PASI…VVSV, TPLL…EVVI, PSLD…LFAI, FAPI…NSIF, ASFF…ALYA, WFMV…ALLL, ALLP…QAVI, IYIP…IMSF, LAAA…ILSC, LVAA…AANL, and IFSG…VMTS.

Belongs to the HAK/KUP transporter (TC 2.A.72) family.

Its subcellular location is the cell inner membrane. It catalyses the reaction K(+)(in) + H(+)(in) = K(+)(out) + H(+)(out). Functionally, transport of potassium into the cell. Likely operates as a K(+):H(+) symporter. This Aeromonas hydrophila subsp. hydrophila (strain ATCC 7966 / DSM 30187 / BCRC 13018 / CCUG 14551 / JCM 1027 / KCTC 2358 / NCIMB 9240 / NCTC 8049) protein is Probable potassium transport system protein Kup 2.